We begin with the raw amino-acid sequence, 424 residues long: Deoxyguanosinetriphosphate triphosphohydrolase-like protein (424 aa).

Residues 1–24 (MYPYSDADAFRRHPERAKSSQLRT) are disordered. Residues 8 to 18 (DAFRRHPERAK) are compositionally biased toward basic and acidic residues. The region spanning 67–217 (RLTHSLEVAQ…MDFSDDIAYS (151 aa)) is the HD domain.

It belongs to the dGTPase family. Type 2 subfamily.

The chain is Deoxyguanosinetriphosphate triphosphohydrolase-like protein from Corynebacterium glutamicum (strain R).